A 244-amino-acid polypeptide reads, in one-letter code: tRNA pseudouridine synthase A (244 aa).

Catalysis depends on D52, which acts as the Nucleophile. A substrate-binding site is contributed by Y111.

It belongs to the tRNA pseudouridine synthase TruA family. As to quaternary structure, homodimer.

It catalyses the reaction uridine(38/39/40) in tRNA = pseudouridine(38/39/40) in tRNA. Formation of pseudouridine at positions 38, 39 and 40 in the anticodon stem and loop of transfer RNAs. This is tRNA pseudouridine synthase A from Thermosipho melanesiensis (strain DSM 12029 / CIP 104789 / BI429).